The following is a 134-amino-acid chain: Large-conductance mechanosensitive channel (134 aa).

2 helical membrane passes run 16 to 36 (VIDLAVAVVIGAAFGKIVTAL) and 81 to 101 (GDFINTILQFIIIAFAIFIIV).

This sequence belongs to the MscL family. Homopentamer.

The protein localises to the cell inner membrane. Channel that opens in response to stretch forces in the membrane lipid bilayer. May participate in the regulation of osmotic pressure changes within the cell. In Xylella fastidiosa (strain Temecula1 / ATCC 700964), this protein is Large-conductance mechanosensitive channel.